The chain runs to 126 residues: Small ribosomal subunit protein uS12 (126 aa).

Positions Met-1–Gln-29 are disordered. Asp-89 is subject to 3-methylthioaspartic acid.

This sequence belongs to the universal ribosomal protein uS12 family. Part of the 30S ribosomal subunit. Contacts proteins S8 and S17. May interact with IF1 in the 30S initiation complex.

Its function is as follows. With S4 and S5 plays an important role in translational accuracy. Functionally, interacts with and stabilizes bases of the 16S rRNA that are involved in tRNA selection in the A site and with the mRNA backbone. Located at the interface of the 30S and 50S subunits, it traverses the body of the 30S subunit contacting proteins on the other side and probably holding the rRNA structure together. The combined cluster of proteins S8, S12 and S17 appears to hold together the shoulder and platform of the 30S subunit. This chain is Small ribosomal subunit protein uS12, found in Protochlamydia amoebophila (strain UWE25).